The primary structure comprises 1885 residues: Chitin synthase 5 (1885 aa).

The Myosin motor domain maps to 1–789; the sequence is MATRGNVPAH…SIALTGSQAA (789 aa). 99–106 is an ATP binding site; the sequence is GESGSGKT. N-linked (GlcNAc...) asparagine glycosylation is found at asparagine 219 and asparagine 429. The tract at residues 601–649 is disordered; it reads KPLRMPSVSRKKHDQLRRMASRRADRSPAPQEEEPLPGTEEAKVRRTKP. Positions 609-621 are enriched in basic residues; the sequence is SRKKHDQLRRMAS. The tract at residues 666–690 is actin-binding; the sequence is LDNITKSLTAPNVNNYFVFCLKPND. Asparagine 668 carries an N-linked (GlcNAc...) asparagine glycan. The disordered stretch occupies residues 794–817; it reads GDIGSPSRPDTPGHNPFSDSKARL. 2 helical membrane passes run 894–914 and 929–949; these read WLAI…KWIG and FAIN…IIVF. The Cytochrome b5 heme-binding domain occupies 957-1016; that stretch reads QNVYSAAELSAHDGKGKHSAYVAIRGQVFDLGAFMPNHYPKIIPQSSLKKYAGVDATGLF. N-linked (GlcNAc...) asparagine glycans are attached at residues asparagine 1043 and asparagine 1068. Residues 1205 to 1225 traverse the membrane as a helical segment; sequence ILLAVSILLCSVIGFKFFAAL. 2 N-linked (GlcNAc...) asparagine glycosylation sites follow: asparagine 1462 and asparagine 1568. A run of 3 helical transmembrane segments spans residues 1599-1619, 1626-1646, and 1653-1673; these read LLST…IVLL, VPLT…IIFI, and MIGW…GLPL. Asparagine 1759 and asparagine 1790 each carry an N-linked (GlcNAc...) asparagine glycan. In terms of domain architecture, DEK-C spans 1827–1882; that stretch reads LPTDDMLLNEIRDILRTADLMTVTKKGIKQELERRFNVNLDMKRAYIGSATEAILS.

It in the N-terminal section; belongs to the TRAFAC class myosin-kinesin ATPase superfamily. Myosin family. The protein in the C-terminal section; belongs to the chitin synthase family. Class V subfamily. In terms of processing, maximal activity requires trypsin activation, suggesting a zymogenic nature.

The protein localises to the cell membrane. It is found in the membrane. It catalyses the reaction [(1-&gt;4)-N-acetyl-beta-D-glucosaminyl](n) + UDP-N-acetyl-alpha-D-glucosamine = [(1-&gt;4)-N-acetyl-beta-D-glucosaminyl](n+1) + UDP + H(+). Polymerizes chitin, a structural polymer of the cell wall and septum, by transferring the sugar moiety of UDP-GlcNAc to the non-reducing end of the growing chitin polymer. CHS5 is required for the sustained growth at 37 degrees Celsius and is of critical importance for virulence. Especially important at infection temperatures for maintaining the cell wall integrity of developing yeast buds, elongating tips of hyphae, and random sites of expansion in sclerotic forms. The polypeptide is Chitin synthase 5 (Exophiala dermatitidis (strain ATCC 34100 / CBS 525.76 / NIH/UT8656) (Black yeast)).